Here is a 101-residue protein sequence, read N- to C-terminus: NAD(P)H-quinone oxidoreductase subunit 4L, chloroplastic (101 aa).

3 consecutive transmembrane segments (helical) span residues Met2–Ile22, Ile32–Phe52, and Ile61–Leu81.

Belongs to the complex I subunit 4L family. In terms of assembly, NDH is composed of at least 16 different subunits, 5 of which are encoded in the nucleus.

The protein localises to the plastid. Its subcellular location is the chloroplast thylakoid membrane. The enzyme catalyses a plastoquinone + NADH + (n+1) H(+)(in) = a plastoquinol + NAD(+) + n H(+)(out). It catalyses the reaction a plastoquinone + NADPH + (n+1) H(+)(in) = a plastoquinol + NADP(+) + n H(+)(out). Its function is as follows. NDH shuttles electrons from NAD(P)H:plastoquinone, via FMN and iron-sulfur (Fe-S) centers, to quinones in the photosynthetic chain and possibly in a chloroplast respiratory chain. The immediate electron acceptor for the enzyme in this species is believed to be plastoquinone. Couples the redox reaction to proton translocation, and thus conserves the redox energy in a proton gradient. In Oryza nivara (Indian wild rice), this protein is NAD(P)H-quinone oxidoreductase subunit 4L, chloroplastic.